Here is a 794-residue protein sequence, read N- to C-terminus: DNA mismatch repair protein pms1 (794 aa).

Disordered regions lie at residues 351-384 and 409-442; these read SQIPDSSGDSTDQELPQSIPATESETSDDSSFSY and GASLAQVSKPLPERLQKDSMRRSSPLNEKVTASS. The segment covering 352–371 has biased composition (polar residues); it reads QIPDSSGDSTDQELPQSIPA. Residues 419–429 show a composition bias toward basic and acidic residues; that stretch reads LPERLQKDSMR. The segment covering 430 to 442 has biased composition (polar residues); that stretch reads RSSPLNEKVTASS.

Belongs to the DNA mismatch repair MutL/HexB family.

In terms of biological role, this protein is involved in the repair of mismatches in DNA. The protein is DNA mismatch repair protein pms1 (pms1) of Schizosaccharomyces pombe (strain 972 / ATCC 24843) (Fission yeast).